A 116-amino-acid chain; its full sequence is MYEQAIVIRNDLKMGKGKMAAQACHASLQAFLHAQKISSSAVSGWMNEGQKKVVLKVNSEKELLEIFKNVNIEGLPCSLIRDAGRTQIEPGSLTAVGIGPEKEEKISKVTKDLKLL.

The protein belongs to the PTH2 family.

Its subcellular location is the cytoplasm. The catalysed reaction is an N-acyl-L-alpha-aminoacyl-tRNA + H2O = an N-acyl-L-amino acid + a tRNA + H(+). In terms of biological role, the natural substrate for this enzyme may be peptidyl-tRNAs which drop off the ribosome during protein synthesis. The polypeptide is Peptidyl-tRNA hydrolase (Methanococcus maripaludis (strain C6 / ATCC BAA-1332)).